The chain runs to 312 residues: Adenylyl-sulfate kinase, chloroplastic (312 aa).

ATP is bound at residue 142 to 149 (GLSGSGKS). Serine 216 serves as the catalytic Phosphoserine intermediate.

It belongs to the APS kinase family.

The protein localises to the plastid. The protein resides in the chloroplast. It carries out the reaction adenosine 5'-phosphosulfate + ATP = 3'-phosphoadenylyl sulfate + ADP + H(+). It functions in the pathway sulfur metabolism; hydrogen sulfide biosynthesis; sulfite from sulfate: step 2/3. Its function is as follows. Catalyzes the synthesis of activated sulfate. This chain is Adenylyl-sulfate kinase, chloroplastic (AKN), found in Catharanthus roseus (Madagascar periwinkle).